Here is a 1037-residue protein sequence, read N- to C-terminus: Ephrin type-A receptor 5 (1037 aa).

The first 24 residues, 1 to 24 (MRGSGPRGAGRRRPPSGGGDTPIT), serve as a signal peptide directing secretion. Residues 1–24 (MRGSGPRGAGRRRPPSGGGDTPIT) are disordered. The Extracellular portion of the chain corresponds to 25-573 (PASLAGCYSA…AASSDQSQIP (549 aa)). In terms of domain architecture, Eph LBD spans 60 to 238 (EVNLLDSRTV…YYKKCPSVVR (179 aa)). Residues N264, N299, N369, N423, N436, and N461 are each glycosylated (N-linked (GlcNAc...) asparagine). Fibronectin type-III domains are found at residues 357–467 (PPSA…TNQA) and 468–562 (APSP…TTPV). The helical transmembrane segment at 574–594 (VIAVSVTVGVILLAVVIGVLL) threads the bilayer. Topologically, residues 595–1037 (SGSCCECGCG…VQLVNGMVPL (443 aa)) are cytoplasmic. 2 positions are modified to phosphotyrosine; by autocatalysis: Y650 and Y656. The region spanning 675 to 936 (ITIERVIGAG…EIVNMLDKLI (262 aa)) is the Protein kinase domain. Residues 681 to 689 (IGAGEFGEV) and K707 each bind ATP. D800 functions as the Proton acceptor in the catalytic mechanism. A phosphotyrosine; by autocatalysis mark is found at Y833 and Y982. In terms of domain architecture, SAM spans 965–1029 (GAYRSVGEWL…MNSLQEMKVQ (65 aa)). The PDZ-binding signature appears at 1035-1037 (VPL).

The protein belongs to the protein kinase superfamily. Tyr protein kinase family. Ephrin receptor subfamily. As to quaternary structure, heterotetramer upon binding of the ligand. The heterotetramer is composed of an ephrin dimer and a receptor dimer. Oligomerization is probably required to induce biological responses. Interacts (via SAM domain) with SAMD5 (via SAM domain). Phosphorylated. Phosphorylation is stimulated by the ligand EFNA5. Dephosphorylation upon stimulation by glucose, inhibits EPHA5 forward signaling and results in insulin secretion. As to expression, almost exclusively expressed in the nervous system in cortical neurons, cerebellar Purkinje cells and pyramidal neurons within the cortex and hippocampus. Display an increasing gradient of expression from the forebrain to hindbrain and spinal cord.

The protein localises to the cell membrane. It is found in the cell projection. It localises to the axon. Its subcellular location is the dendrite. The enzyme catalyses L-tyrosyl-[protein] + ATP = O-phospho-L-tyrosyl-[protein] + ADP + H(+). Its function is as follows. Receptor tyrosine kinase which binds promiscuously GPI-anchored ephrin-A family ligands residing on adjacent cells, leading to contact-dependent bidirectional signaling into neighboring cells. The signaling pathway downstream of the receptor is referred to as forward signaling while the signaling pathway downstream of the ephrin ligand is referred to as reverse signaling. Among GPI-anchored ephrin-A ligands, EFNA5 most probably constitutes the cognate/functional ligand for EPHA5. Functions as an axon guidance molecule during development and may be involved in the development of the retinotectal, entorhino-hippocampal and hippocamposeptal pathways. Together with EFNA5 plays also a role in synaptic plasticity in adult brain through regulation of synaptogenesis. In addition to its function in the nervous system, the interaction of EPHA5 with EFNA5 mediates communication between pancreatic islet cells to regulate glucose-stimulated insulin secretion. The sequence is that of Ephrin type-A receptor 5 (EPHA5) from Homo sapiens (Human).